The sequence spans 515 residues: Maturase K (515 aa).

This sequence belongs to the intron maturase 2 family. MatK subfamily.

Its subcellular location is the plastid. It localises to the chloroplast. Usually encoded in the trnK tRNA gene intron. Probably assists in splicing its own and other chloroplast group II introns. The chain is Maturase K from Pinus patula (Mexican weeping pine).